We begin with the raw amino-acid sequence, 183 residues long: Ribosome-recycling factor (183 aa).

Belongs to the RRF family.

The protein localises to the cytoplasm. Functionally, responsible for the release of ribosomes from messenger RNA at the termination of protein biosynthesis. May increase the efficiency of translation by recycling ribosomes from one round of translation to another. The protein is Ribosome-recycling factor of Acetivibrio thermocellus (strain ATCC 27405 / DSM 1237 / JCM 9322 / NBRC 103400 / NCIMB 10682 / NRRL B-4536 / VPI 7372) (Clostridium thermocellum).